The primary structure comprises 31 residues: Photosystem II reaction center protein T (31 aa).

Residues 3–23 traverse the membrane as a helical segment; that stretch reads ALVYTFLLIGTLGIIFFAIFF.

This sequence belongs to the PsbT family. As to quaternary structure, PSII is composed of 1 copy each of membrane proteins PsbA, PsbB, PsbC, PsbD, PsbE, PsbF, PsbH, PsbI, PsbJ, PsbK, PsbL, PsbM, PsbT, PsbY, PsbZ, Psb30/Ycf12, at least 3 peripheral proteins of the oxygen-evolving complex and a large number of cofactors. It forms dimeric complexes.

Its subcellular location is the plastid. The protein localises to the chloroplast thylakoid membrane. In terms of biological role, found at the monomer-monomer interface of the photosystem II (PS II) dimer, plays a role in assembly and dimerization of PSII. PSII is a light-driven water plastoquinone oxidoreductase, using light energy to abstract electrons from H(2)O, generating a proton gradient subsequently used for ATP formation. In Stigeoclonium helveticum (Green alga), this protein is Photosystem II reaction center protein T.